A 187-amino-acid polypeptide reads, in one-letter code: dCTP deaminase, dUMP-forming (187 aa).

DCTP contacts are provided by residues 99–104 (KSSIAR), aspartate 117, 125–127 (TLE), glutamine 146, tyrosine 159, lysine 166, and glutamine 170. Residue glutamate 127 is the Proton donor/acceptor of the active site.

The protein belongs to the dCTP deaminase family. Homotrimer.

The catalysed reaction is dCTP + 2 H2O = dUMP + NH4(+) + diphosphate. Its pathway is pyrimidine metabolism; dUMP biosynthesis; dUMP from dCTP: step 1/1. Its function is as follows. Bifunctional enzyme that catalyzes both the deamination of dCTP to dUTP and the hydrolysis of dUTP to dUMP without releasing the toxic dUTP intermediate. This is dCTP deaminase, dUMP-forming from Methanoculleus marisnigri (strain ATCC 35101 / DSM 1498 / JR1).